Consider the following 800-residue polypeptide: Protein SPT2 homolog (800 aa).

An important for interaction with DNA region spans residues 1 to 687 (MDFHSVLRMA…PGHRPNMQPP (687 aa)). The stretch at 53–82 (QEIQNKEVEAKRKKEGLLAKRKELKHDRKA) forms a coiled coil. Disordered regions lie at residues 70 to 173 (LAKR…PALN), 197 to 646 (KEER…MAKP), and 661 to 698 (VPKSINGHMNGMRSAVPPGHRPNMQPPGRPLPPITSSY). Residues 124–137 (TEEDEEYMTEEELY) are compositionally biased toward acidic residues. A compositionally biased stretch (low complexity) spans 155–164 (PQKVAKAAPG). The stretch at 196 to 224 (KKEERLRTAEELKELEFLERKAQKADRKD) forms a coiled coil. 2 stretches are compositionally biased toward basic and acidic residues: residues 197-226 (KEERLRTAEELKELEFLERKAQKADRKDPM) and 249-259 (HSVEKRSHENS). Residues 260–272 (KSSSTEQNGTFRK) show a composition bias toward polar residues. Basic and acidic residues predominate over residues 273–295 (SSSDNRSREEKSGSVFHTKDSKF). Low complexity-rich tracts occupy residues 328 to 360 (SGSTSLRPSSGGSSSVSGRPSGSSEKPGSSSGK), 367 to 377 (SSSARSSSGSG), 390 to 424 (GASGSGSARSVGESGSRSGKPTGASGSGLARSVGA), 443 to 501 (GVSG…SVSG), and 514 to 581 (GAPG…ASSS). Residues 608–626 (NSVRHNTTSISVSARSSLG) show a composition bias toward polar residues. Over residues 684–693 (MQPPGRPLPP) the composition is skewed to pro residues. An important for interaction with histones region spans residues 688-800 (GRPLPPITSS…LKSAKKMKSR (113 aa)). Residues 756–800 (REQQKEEARSLRLGIQEDLEELRREEEELKQKAKQLKSAKKMKSR) adopt a coiled-coil conformation.

Belongs to the SPT2 family. In terms of assembly, interacts with histones. Interacts with a heterotetrameric complex formed by histone H3 and H4, especially when the histone tetramer is not bound to DNA.

The protein localises to the nucleus. It is found in the nucleolus. Functionally, histone chaperone that stabilizes pre-existing histone tetramers and regulates replication-independent histone exchange on chromatin. Required for normal chromatin refolding in the coding region of transcribed genes, and for the suppression of spurious transcription. Binds DNA and histones and promotes nucleosome assembly (in vitro). Facilitates formation of tetrameric histone complexes containing histone H3 and H4. Modulates RNA polymerase 1-mediated transcription. Binds DNA, with a preference for branched DNA species, such as Y-form DNA and Holliday junction DNA. This Xenopus laevis (African clawed frog) protein is Protein SPT2 homolog (spty2d1).